Consider the following 101-residue polypeptide: Small ribosomal subunit protein uS14 (101 aa).

Belongs to the universal ribosomal protein uS14 family. Part of the 30S ribosomal subunit. Contacts proteins S3 and S10.

In terms of biological role, binds 16S rRNA, required for the assembly of 30S particles and may also be responsible for determining the conformation of the 16S rRNA at the A site. This chain is Small ribosomal subunit protein uS14, found in Shewanella amazonensis (strain ATCC BAA-1098 / SB2B).